The sequence spans 143 residues: Large ribosomal subunit protein uL11 (143 aa).

The protein belongs to the universal ribosomal protein uL11 family. As to quaternary structure, part of the ribosomal stalk of the 50S ribosomal subunit. Interacts with L10 and the large rRNA to form the base of the stalk. L10 forms an elongated spine to which L12 dimers bind in a sequential fashion forming a multimeric L10(L12)X complex. In terms of processing, one or more lysine residues are methylated.

Functionally, forms part of the ribosomal stalk which helps the ribosome interact with GTP-bound translation factors. This chain is Large ribosomal subunit protein uL11, found in Methylibium petroleiphilum (strain ATCC BAA-1232 / LMG 22953 / PM1).